Reading from the N-terminus, the 471-residue chain is Rho GTPase-activating protein 15 (471 aa).

A disordered region spans residues 1–20; the sequence is MQKSTNSDIPVETLNPTRQG. A Phosphoserine modification is found at Ser43. Residues 79 to 189 form the PH domain; sequence MVEKEGYLQK…WFHAIKNAID (111 aa). Residues Ser196, Ser199, and Ser243 each carry the phosphoserine modification. The 190-residue stretch at 281–470 folds into the Rho-GAP domain; that stretch reads SHLHTLCERE…LMLSAYDQIF (190 aa).

It localises to the cytoplasm. The protein localises to the membrane. GTPase activator for the Rho-type GTPases by converting them to an inactive GDP-bound state. Has activity toward RAC1. Overexpression results in an increase in actin stress fibers and cell contraction. The polypeptide is Rho GTPase-activating protein 15 (ARHGAP15) (Bos taurus (Bovine)).